A 339-amino-acid chain; its full sequence is Fructose-1,6-bisphosphatase class 1 (339 aa).

The Mg(2+) site is built by glutamate 94, aspartate 116, leucine 118, and aspartate 119. Substrate-binding positions include 119 to 122, asparagine 210, and lysine 276; that span reads DGSS. Glutamate 282 provides a ligand contact to Mg(2+).

Belongs to the FBPase class 1 family. Homotetramer. Mg(2+) serves as cofactor.

It localises to the cytoplasm. It catalyses the reaction beta-D-fructose 1,6-bisphosphate + H2O = beta-D-fructose 6-phosphate + phosphate. The protein operates within carbohydrate biosynthesis; gluconeogenesis. This is Fructose-1,6-bisphosphatase class 1 from Burkholderia ambifaria (strain ATCC BAA-244 / DSM 16087 / CCUG 44356 / LMG 19182 / AMMD) (Burkholderia cepacia (strain AMMD)).